The primary structure comprises 378 residues: Probable G-protein coupled receptor frpr-1 (378 aa).

7 helical membrane-spanning segments follow: residues 47–67 (LVVIGLMLPLIGCLGLIGNAL), 85–105 (LFALACSDIVIILTAFFLFFL), 120–140 (AVLSPVMFPLGLTAQTMSVFI), 180–200 (VIVCLKIIVKIFLLGIFYNSP), 243–263 (TIVMAVGPVLLLIVINTAIVI), 277–297 (IITLVLVVCLFISCNVLPLTV), and 315–337 (SNLMVVVNSSCNFLIYYTFGSNF).

This sequence belongs to the G-protein coupled receptor 1 family.

It localises to the cell membrane. This Caenorhabditis elegans protein is Probable G-protein coupled receptor frpr-1.